Reading from the N-terminus, the 237-residue chain is Uridylate kinase (237 aa).

Residue 12-15 (KLSG) participates in ATP binding. The tract at residues 20-25 (GENGYG) is involved in allosteric activation by GTP. Gly54 is a UMP binding site. Gly55 and Arg59 together coordinate ATP. UMP is bound by residues Asp72 and 133 to 140 (TGNPYFST). Residues Tyr166 and Asp169 each contribute to the ATP site.

Belongs to the UMP kinase family. Homohexamer.

It is found in the cytoplasm. It catalyses the reaction UMP + ATP = UDP + ADP. Its pathway is pyrimidine metabolism; CTP biosynthesis via de novo pathway; UDP from UMP (UMPK route): step 1/1. With respect to regulation, allosterically activated by GTP. Inhibited by UTP. Its function is as follows. Catalyzes the reversible phosphorylation of UMP to UDP. In Clostridium tetani (strain Massachusetts / E88), this protein is Uridylate kinase.